The following is a 955-amino-acid chain: 2-oxoglutarate dehydrogenase E1 component (955 aa).

This sequence belongs to the alpha-ketoglutarate dehydrogenase family. In terms of assembly, homodimer. Part of the 2-oxoglutarate dehydrogenase (OGDH) complex composed of E1 (2-oxoglutarate dehydrogenase), E2 (dihydrolipoamide succinyltransferase) and E3 (dihydrolipoamide dehydrogenase); the complex contains multiple copies of the three enzymatic components (E1, E2 and E3). The cofactor is thiamine diphosphate.

It carries out the reaction N(6)-[(R)-lipoyl]-L-lysyl-[protein] + 2-oxoglutarate + H(+) = N(6)-[(R)-S(8)-succinyldihydrolipoyl]-L-lysyl-[protein] + CO2. Functionally, E1 component of the 2-oxoglutarate dehydrogenase (OGDH) complex which catalyzes the decarboxylation of 2-oxoglutarate, the first step in the conversion of 2-oxoglutarate to succinyl-CoA and CO(2). In Bacillus cereus (strain ATCC 14579 / DSM 31 / CCUG 7414 / JCM 2152 / NBRC 15305 / NCIMB 9373 / NCTC 2599 / NRRL B-3711), this protein is 2-oxoglutarate dehydrogenase E1 component.